A 90-amino-acid chain; its full sequence is Small ribosomal subunit protein uS17 (90 aa).

The protein belongs to the universal ribosomal protein uS17 family. Part of the 30S ribosomal subunit.

In terms of biological role, one of the primary rRNA binding proteins, it binds specifically to the 5'-end of 16S ribosomal RNA. The protein is Small ribosomal subunit protein uS17 of Gluconobacter oxydans (strain 621H) (Gluconobacter suboxydans).